A 206-amino-acid polypeptide reads, in one-letter code: Uridine kinase (206 aa).

Gly-9–Thr-16 is a binding site for ATP.

It belongs to the uridine kinase family.

The protein resides in the cytoplasm. The catalysed reaction is uridine + ATP = UMP + ADP + H(+). The enzyme catalyses cytidine + ATP = CMP + ADP + H(+). It functions in the pathway pyrimidine metabolism; CTP biosynthesis via salvage pathway; CTP from cytidine: step 1/3. It participates in pyrimidine metabolism; UMP biosynthesis via salvage pathway; UMP from uridine: step 1/1. This Borrelia duttonii (strain Ly) protein is Uridine kinase.